A 478-amino-acid polypeptide reads, in one-letter code: Chromosomal replication initiator protein DnaA (478 aa).

Positions 1–71 (MNLTHIWKTT…RNALTRVVGY (71 aa)) are domain I, interacts with DnaA modulators. The interval 71–136 (YPVQVQVLIA…LDLASAMRSG (66 aa)) is domain II. The tract at residues 137–353 (MLNPRYTFAS…GSLNRVAAYA (217 aa)) is domain III, AAA+ region. G181, G183, K184, and T185 together coordinate ATP. Residues 354–478 (ELNRLPITID…RERIQMMRGL (125 aa)) are domain IV, binds dsDNA.

It belongs to the DnaA family. Oligomerizes as a right-handed, spiral filament on DNA at oriC.

It is found in the cytoplasm. Functionally, plays an essential role in the initiation and regulation of chromosomal replication. ATP-DnaA binds to the origin of replication (oriC) to initiate formation of the DNA replication initiation complex once per cell cycle. Binds the DnaA box (a 9 base pair repeat at the origin) and separates the double-stranded (ds)DNA. Forms a right-handed helical filament on oriC DNA; dsDNA binds to the exterior of the filament while single-stranded (ss)DNA is stabiized in the filament's interior. The ATP-DnaA-oriC complex binds and stabilizes one strand of the AT-rich DNA unwinding element (DUE), permitting loading of DNA polymerase. After initiation quickly degrades to an ADP-DnaA complex that is not apt for DNA replication. Binds acidic phospholipids. The chain is Chromosomal replication initiator protein DnaA from Chloroflexus aggregans (strain MD-66 / DSM 9485).